Reading from the N-terminus, the 80-residue chain is Small ribosomal subunit protein bS18 (80 aa).

Belongs to the bacterial ribosomal protein bS18 family. Part of the 30S ribosomal subunit. Forms a tight heterodimer with protein bS6.

Binds as a heterodimer with protein bS6 to the central domain of the 16S rRNA, where it helps stabilize the platform of the 30S subunit. This is Small ribosomal subunit protein bS18 from Staphylococcus aureus (strain Mu3 / ATCC 700698).